Here is a 355-residue protein sequence, read N- to C-terminus: Heat-inducible transcription repressor HrcA (355 aa).

This sequence belongs to the HrcA family.

Its function is as follows. Negative regulator of class I heat shock genes (grpE-dnaK-dnaJ and groELS operons). Prevents heat-shock induction of these operons. In Nitratidesulfovibrio vulgaris (strain DP4) (Desulfovibrio vulgaris), this protein is Heat-inducible transcription repressor HrcA.